A 273-amino-acid chain; its full sequence is Hydroxyethylthiazole kinase (273 aa).

M41 contacts substrate. Residues R117 and T170 each contribute to the ATP site. G197 serves as a coordination point for substrate.

This sequence belongs to the Thz kinase family. Requires Mg(2+) as cofactor.

It catalyses the reaction 5-(2-hydroxyethyl)-4-methylthiazole + ATP = 4-methyl-5-(2-phosphooxyethyl)-thiazole + ADP + H(+). It participates in cofactor biosynthesis; thiamine diphosphate biosynthesis; 4-methyl-5-(2-phosphoethyl)-thiazole from 5-(2-hydroxyethyl)-4-methylthiazole: step 1/1. Catalyzes the phosphorylation of the hydroxyl group of 4-methyl-5-beta-hydroxyethylthiazole (THZ). The sequence is that of Hydroxyethylthiazole kinase from Clostridium acetobutylicum (strain ATCC 824 / DSM 792 / JCM 1419 / IAM 19013 / LMG 5710 / NBRC 13948 / NRRL B-527 / VKM B-1787 / 2291 / W).